A 158-amino-acid chain; its full sequence is Pyruvoyl-dependent arginine decarboxylase (158 aa).

S44 carries the post-translational modification Pyruvic acid (Ser).

The protein belongs to the PdaD family. It depends on pyruvate as a cofactor.

It catalyses the reaction L-arginine + H(+) = agmatine + CO2. The protein is Pyruvoyl-dependent arginine decarboxylase of Thermococcus sibiricus (strain DSM 12597 / MM 739).